The following is a 214-amino-acid chain: Redox-sensing transcriptional repressor Rex (214 aa).

Residues leucine 17 to phenylalanine 56 constitute a DNA-binding region (H-T-H motif). Glycine 91 to glycine 96 lines the NAD(+) pocket.

The protein belongs to the transcriptional regulatory Rex family. Homodimer.

Its subcellular location is the cytoplasm. In terms of biological role, modulates transcription in response to changes in cellular NADH/NAD(+) redox state. The polypeptide is Redox-sensing transcriptional repressor Rex (Streptococcus equi subsp. zooepidemicus (strain H70)).